The following is a 285-amino-acid chain: Chemotaxis protein LafT (285 aa).

4 helical membrane-spanning segments follow: residues 4–23, 34–51, 171–191, and 201–222; these read FLGVLTILVCVFGGYMWAGG, FLIIIGAAAGSLIIGNPP, ALPGFGILAAVGGIIITMQAI, and HVAAALVGTFIGIFGCYCGLDP. Residues 223-285 lie on the Cytoplasmic side of the membrane; the sequence is LSNAMAQRVK…MEKWLAEQEG (63 aa).

This sequence belongs to the MotA family.

It localises to the cell inner membrane. Its function is as follows. Required for rotation of the flagellar motor. Probable transmembrane proton channel. This is Chemotaxis protein LafT (lafT) from Vibrio parahaemolyticus serotype O3:K6 (strain RIMD 2210633).